We begin with the raw amino-acid sequence, 553 residues long: Protein YloV (553 aa).

The DhaL domain occupies 9 to 201; it reads RTFAEMILAG…LLCVYEGFLA (193 aa).

In Bacillus subtilis (strain 168), this protein is Protein YloV (yloV).